The primary structure comprises 140 residues: Protein PsiE homolog (140 aa).

4 helical membrane passes run 16–36 (IVLQYILNVALICLGVVLSVF), 57–77 (YHLIDSIVVFFLYFEFIVMII), 85–105 (HFPLRYFIYIGITAIVRLIII), and 110–130 (PLDLLLYACAIFVLISALFIA).

The protein belongs to the PsiE family.

The protein localises to the cell membrane. The protein is Protein PsiE homolog of Bacillus cereus (strain ATCC 14579 / DSM 31 / CCUG 7414 / JCM 2152 / NBRC 15305 / NCIMB 9373 / NCTC 2599 / NRRL B-3711).